The chain runs to 485 residues: Glutamyl-tRNA(Gln) amidotransferase subunit A (485 aa).

Active-site charge relay system residues include Lys79 and Ser154. The active-site Acyl-ester intermediate is the Ser178.

It belongs to the amidase family. GatA subfamily. In terms of assembly, heterotrimer of A, B and C subunits.

It carries out the reaction L-glutamyl-tRNA(Gln) + L-glutamine + ATP + H2O = L-glutaminyl-tRNA(Gln) + L-glutamate + ADP + phosphate + H(+). Its function is as follows. Allows the formation of correctly charged Gln-tRNA(Gln) through the transamidation of misacylated Glu-tRNA(Gln) in organisms which lack glutaminyl-tRNA synthetase. The reaction takes place in the presence of glutamine and ATP through an activated gamma-phospho-Glu-tRNA(Gln). This Staphylococcus aureus (strain MW2) protein is Glutamyl-tRNA(Gln) amidotransferase subunit A.